We begin with the raw amino-acid sequence, 1183 residues long: Polyphosphatidylinositol phosphatase INP52 (1183 aa).

Residues 133 to 153 (PPSISTHSSRSSLRSSSSRSL) show a composition bias toward low complexity. The segment at 133 to 161 (PPSISTHSSRSSLRSSSSRSLNAQEQAPK) is disordered. Ser-152 is modified (phosphoserine). The 341-residue stretch at 167-507 (LRKLLSNGSF…GDQISQIYTG (341 aa)) folds into the SAC domain. Ser-522 carries the post-translational modification Phosphoserine. Positions 955-968 (SPLLSGPSPQPSVV) are enriched in low complexity. A disordered region spans residues 955–1183 (SPLLSGPSPQ…VHPLKPCDPN (229 aa)). A phosphoserine mark is found at Ser-1005 and Ser-1016. Position 1032 is a phosphothreonine (Thr-1032). Polar residues-rich tracts occupy residues 1046 to 1057 (KPVSLQKSSSEL), 1082 to 1100 (STAP…VSTT), and 1130 to 1145 (KLNT…SPSN). Ser-1095 is modified (phosphoserine).

Belongs to the synaptojanin family. It in the central section; belongs to the inositol 1,4,5-trisphosphate 5-phosphatase family. In terms of assembly, interacts (via SAC domain) with BSP1; the interaction is direct. Interacts with ABP1.

The protein resides in the cytoplasm. The protein localises to the cytoskeleton. It localises to the actin patch. The enzyme catalyses a 1,2-diacyl-sn-glycero-3-phospho-(1D-myo-inositol-4,5-bisphosphate) + H2O = a 1,2-diacyl-sn-glycero-3-phospho-(1D-myo-inositol 4-phosphate) + phosphate. Functionally, dephosphorylates a number of phosphatidylinositols (PIs) like phosphatidylinositol 4,5-bisphosphate (PtdIns(4,5)P2), but also phosphatidylinositol 3-phosphate (PtdIns(3)P), phosphatidylinositol 4-phosphate (PtdIns(4)P), and phosphatidylinositol 3,5-bisphosphate (PtdIns(3,5)P2). Controls the cellular levels and subcellular distribution of phosphatidylinositol 3-phosphate and phosphatidylinositol 4,5-bisphosphate. Specifically functions within the early endocytic pathway and actin organization. This chain is Polyphosphatidylinositol phosphatase INP52, found in Saccharomyces cerevisiae (strain ATCC 204508 / S288c) (Baker's yeast).